A 700-amino-acid chain; its full sequence is E3 ubiquitin-protein ligase SspH1 (700 aa).

The segment at 1–395 is interaction with target proteins; the sequence is MFNIRNTQPS…HSGIRIHFDM (395 aa). LRR repeat units follow at residues 217-238, 239-257, 258-279, 280-297, 298-319, 320-337, 338-360, and 361-381; these read HITT…PEGL, RELE…SLPQ, GLQK…PPGL, GDLA…EMPP, ALRE…PSGL, QKLW…EMSP, GLQE…TGLS, and SAAR…QALR. Residues 396-403 form a linker region; that stretch reads AGPSVPRE. Positions 404 to 700 are E3 ubiquitin-protein ligase catalytic domain; the sequence is ARALHLAVAD…SYLTARWRLN (297 aa). An NEL domain is found at 406–700; it reads ALHLAVADWL…SYLTARWRLN (295 aa). Catalysis depends on cysteine 492, which acts as the Glycyl thioester intermediate.

This sequence belongs to the LRR-containing bacterial E3 ligase family. Interacts (via leucine-rich repeat region) with host PKN1 (via the second REM repeat). In terms of processing, ubiquitinated in the presence of host E1 ubiquitin-activating enzyme, E2 ubiquitin-conjugating enzyme and ubiquitin.

Its subcellular location is the secreted. It is found in the host cytoplasm. The protein resides in the host nucleus. The enzyme catalyses S-ubiquitinyl-[E2 ubiquitin-conjugating enzyme]-L-cysteine + [acceptor protein]-L-lysine = [E2 ubiquitin-conjugating enzyme]-L-cysteine + N(6)-ubiquitinyl-[acceptor protein]-L-lysine.. With respect to regulation, exists in an autoinhibited state in the absence of substrate protein, due to interactions of the leucine-rich repeat domain with the catalytic domain. Is activated upon binding to a substrate protein. In terms of biological role, effector proteins function to alter host cell physiology and promote bacterial survival in host tissues. This protein is an E3 ubiquitin-protein ligase that interferes with the host's ubiquitination pathway and targets host proteins for proteasomal degradation. Can ubiquitinate ubiquitin, giving rise to polyubiquitin chains (in vitro). Polyubiquitinates host PKN1, leading to its proteasomal degradation. Down-modulates production of host pro-inflammatory cytokines by inhibiting NF-kappa-B-dependent gene expression; this depends only partially on its E3 ubiquitin-protein ligase activity. In Salmonella typhimurium (strain 14028s / SGSC 2262), this protein is E3 ubiquitin-protein ligase SspH1 (sspH1).